Reading from the N-terminus, the 640-residue chain is MYLNLYEIKIPYRVKRLYYFNKENDPKEFARNLSRVNNIRFNDSKDLVWLEIPDIDFKITPQQAEKYKIEKNEIIGEKEDSDLFVKTIYRYIKKKFIDNNFYYKRGNNYISINDKFPLDSNTNVNAHLTYKIKLYKINERYYISVLPKFTFLSDKPALESPIKSTYLFNIKSGKTFPYISGLNGVLKIDLGENGIKEVLFPENYYFNFTSKEAEKFGFSKEIHNIYKEKIFSGYKKIKQSLYFLEDIININNYNLTMDKKIYVNIEYEFKKGISRNIKDVFKYSFYKNDQKIKIAFFFSSKKQIYEIQRSLKMLFQNKNSIFYQTIYEMGFSKVIFLREPKTNSSAFMYNPETFEISNKDFFENLEGNIMAIIILDKFLGNIDSLIQKFPENLILQPILKEKLEKIQPYIIKSYVYKMGNFIPECQPYVIRNLKDKNKTLYIGIDLSHDNYLKKSNLAISAVNNFGDIIYLNKYKNLELNEKMNLDIVEKEYIQILNEYYERNKNYPENIIVLRDGRYLEDIEIIKNILNIENIKYSLIEVNKSVNINSCEDLKEWIIKLSDNNFIYYPKTYFNQKGVEIKIIENNTDYNNEKILEQVYSLTRVVHPTPYVNYRLPYPLQVVNKVALTELEWKLYIPYMK.

The N-terminal domain stretch occupies residues 1–100 (MYLNLYEIKI…YIKKKFIDNN (100 aa)). Residues 101–153 (FYYKRGNNYISINDKFPLDSNTNVNAHLTYKIKLYKINERYYISVLPKFTFLS) are linker L1. Positions 154–209 (DKPALESPIKSTYLFNIKSGKTFPYISGLNGVLKIDLGENGIKEVLFPENYYFNFT) are PAZ domain. Residues 210–291 (SKEAEKFGFS…KYSFYKNDQK (82 aa)) form a linker L2 region. A mid domain region spans residues 292 to 423 (IKIAFFFSSK…YVYKMGNFIP (132 aa)). The interval 424-640 (ECQPYVIRNL…EWKLYIPYMK (217 aa)) is PIWI domain. Residues D445, E481, D515, and N623 contribute to the active site. A Mn(2+)-binding site is contributed by D445. Positions 515 and 623 each coordinate Mn(2+).

This sequence belongs to the argonaute family. Long pAgo subfamily. It depends on Mn(2+) as a cofactor.

In terms of biological role, a highly versatile argonaute that uses 5'-phospho- and 5'-OH- guide RNA (gRNA) or DNA (gDNA) to cleave target RNA or ssDNA (tDNA) in all possible combinations; has no detectable activity in the absence of guide. Uses short guide sequences (18-21 nucleotides (nt) on average) to bind complementary target nucleic acids resulting in target cleavage in a site-specific manner. Using 5'-phospho-gRNA or 5'-OH-gRNA the cleavage site is 10 nt downstream of the target residue base-paired with the 5'-end of the gRNA, using 5'-phospho-gDNA the cleavage site is 11 nucleotides (nt) downstream, while with 5'-OH-gDNA the cleavage site is 9 nt downstream. This chain is Protein argonaute, found in Marinitoga hydrogenitolerans (strain DSM 16785 / JCM 12826 / AT1271).